We begin with the raw amino-acid sequence, 447 residues long: C4-dicarboxylate transport protein (447 aa).

9 consecutive transmembrane segments (helical) span residues 13-33 (SLYF…HYWP), 49-69 (LIKM…IAGM), 81-101 (LALL…LLIV), 149-169 (AFAK…GFAL), 189-209 (VLFA…FGAM), 227-247 (LMGT…GLIA), 302-322 (GYSF…VFIA), 336-356 (TLLA…GSGF), and 357-377 (IVLA…LALI). The tract at residues 422-447 (ETEAEANEPEAVLDEIDQHMPVPAAR) is disordered. Positions 425 to 436 (AEANEPEAVLDE) are enriched in acidic residues.

It belongs to the dicarboxylate/amino acid:cation symporter (DAACS) (TC 2.A.23) family.

It is found in the cell inner membrane. Functionally, responsible for the transport of dicarboxylates such as succinate, fumarate, and malate from the periplasm across the membrane. This chain is C4-dicarboxylate transport protein, found in Leptothrix cholodnii (strain ATCC 51168 / LMG 8142 / SP-6) (Leptothrix discophora (strain SP-6)).